A 310-amino-acid polypeptide reads, in one-letter code: Carbamate kinase-like protein YqeA (310 aa).

The protein belongs to the carbamate kinase family.

The protein is Carbamate kinase-like protein YqeA (yqeA) of Escherichia coli (strain K12).